The primary structure comprises 289 residues: MYG1 protein TC_0665 (289 aa).

It belongs to the MYG1 family.

In Chlamydia muridarum (strain MoPn / Nigg), this protein is MYG1 protein TC_0665.